The primary structure comprises 311 residues: Meteorin-like protein (311 aa).

The N-terminal stretch at Met-1–Ala-45 is a signal peptide. Cysteines 52 and 75 form a disulfide. A glycan (N-linked (GlcNAc...) asparagine) is linked at Asn-103. Disulfide bonds link Cys-107/Cys-143, Cys-188/Cys-260, Cys-191/Cys-284, and Cys-201/Cys-306.

This sequence belongs to the meteorin family. N-glycosylated. Highly expressed in subcutaneous adipose tissue.

It localises to the secreted. In terms of biological role, hormone induced following exercise or cold exposure that promotes energy expenditure. Induced either in the skeletal muscle after exercise or in adipose tissue following cold exposure and is present in the circulation. Able to stimulate energy expenditure associated with the browning of the white fat depots and improves glucose tolerance. Does not promote an increase in a thermogenic gene program via direct action on adipocytes, but acts by stimulating several immune cell subtypes to enter the adipose tissue and activate their prothermogenic actions. Stimulates an eosinophil-dependent increase in IL4 expression and promotes alternative activation of adipose tissue macrophages, which are required for the increased expression of the thermogenic and anti-inflammatory gene programs in fat. Required for some cold-induced thermogenic responses, suggesting a role in metabolic adaptations to cold temperatures. The sequence is that of Meteorin-like protein (Metrnl) from Mus musculus (Mouse).